Reading from the N-terminus, the 350-residue chain is Biotin synthase (350 aa).

The 219-residue stretch at 38–256 (NHVQVSTLLS…IAVARIMMPE (219 aa)) folds into the Radical SAM core domain. 3 residues coordinate [4Fe-4S] cluster: Cys-53, Cys-57, and Cys-60. [2Fe-2S] cluster-binding residues include Cys-97, Cys-128, Cys-188, and Arg-260.

The protein belongs to the radical SAM superfamily. Biotin synthase family. As to quaternary structure, homodimer. [4Fe-4S] cluster is required as a cofactor. It depends on [2Fe-2S] cluster as a cofactor.

The catalysed reaction is (4R,5S)-dethiobiotin + (sulfur carrier)-SH + 2 reduced [2Fe-2S]-[ferredoxin] + 2 S-adenosyl-L-methionine = (sulfur carrier)-H + biotin + 2 5'-deoxyadenosine + 2 L-methionine + 2 oxidized [2Fe-2S]-[ferredoxin]. It participates in cofactor biosynthesis; biotin biosynthesis; biotin from 7,8-diaminononanoate: step 2/2. Catalyzes the conversion of dethiobiotin (DTB) to biotin by the insertion of a sulfur atom into dethiobiotin via a radical-based mechanism. The chain is Biotin synthase from Aliivibrio fischeri (strain ATCC 700601 / ES114) (Vibrio fischeri).